The chain runs to 202 residues: 3-isopropylmalate dehydratase small subunit (202 aa).

Belongs to the LeuD family. LeuD type 1 subfamily. Heterodimer of LeuC and LeuD.

The enzyme catalyses (2R,3S)-3-isopropylmalate = (2S)-2-isopropylmalate. It functions in the pathway amino-acid biosynthesis; L-leucine biosynthesis; L-leucine from 3-methyl-2-oxobutanoate: step 2/4. In terms of biological role, catalyzes the isomerization between 2-isopropylmalate and 3-isopropylmalate, via the formation of 2-isopropylmaleate. The polypeptide is 3-isopropylmalate dehydratase small subunit (Caulobacter vibrioides (strain ATCC 19089 / CIP 103742 / CB 15) (Caulobacter crescentus)).